The sequence spans 1179 residues: RecBCD enzyme subunit RecB (1179 aa).

A DNA-binding and helicase activity, interacts with RecC region spans residues 1-859 (MVYSDTKTSK…IIQNGKCMNY (859 aa)). The UvrD-like helicase ATP-binding domain occupies 18–459 (NIMKKKLNIF…YYLDTNWRSS (442 aa)). Position 39 to 46 (39 to 46 (ASAGTGKT)) interacts with ATP. Positions 485-755 (EPILSSSKNL…RIITIHKSKG (271 aa)) constitute a UvrD-like helicase C-terminal domain. Positions 910–1179 (YSQITSFTKI…KLTKLILQKK (270 aa)) are nuclease activity, interacts with RecD and RecA. Mg(2+)-binding residues include His-962, Asp-1073, and Asp-1086. Asp-1086 acts as the For nuclease activity in catalysis.

The protein belongs to the helicase family. UvrD subfamily. As to quaternary structure, heterotrimer of RecB, RecC and RecD. All subunits contribute to DNA-binding. Interacts with RecA. Mg(2+) is required as a cofactor.

It carries out the reaction Exonucleolytic cleavage (in the presence of ATP) in either 5'- to 3'- or 3'- to 5'-direction to yield 5'-phosphooligonucleotides.. The enzyme catalyses Couples ATP hydrolysis with the unwinding of duplex DNA by translocating in the 3'-5' direction.. It catalyses the reaction ATP + H2O = ADP + phosphate + H(+). In terms of biological role, a helicase/nuclease that prepares dsDNA breaks (DSB) for recombinational DNA repair. Binds to DSBs and unwinds DNA via a highly rapid and processive ATP-dependent bidirectional helicase activity. Unwinds dsDNA until it encounters a Chi (crossover hotspot instigator) sequence from the 3' direction. Cuts ssDNA a few nucleotides 3' to the Chi site. The properties and activities of the enzyme are changed at Chi. The Chi-altered holoenzyme produces a long 3'-ssDNA overhang and facilitates RecA-binding to the ssDNA for homologous DNA recombination and repair. Holoenzyme degrades any linearized DNA that is unable to undergo homologous recombination. In the holoenzyme this subunit contributes ATPase, 3'-5' helicase, exonuclease activity and loads RecA onto ssDNA. The protein is RecBCD enzyme subunit RecB of Buchnera aphidicola subsp. Schizaphis graminum (strain Sg).